A 226-amino-acid polypeptide reads, in one-letter code: Protein DVU_0532 (226 aa).

The next 6 helical transmembrane spans lie at 1-23 (MYAF…GLLA), 46-57 (AIGLQGAVQSAL), 73-99 (FFTV…NVIL), 112-131 (MGVA…MIAL), 141-164 (ILTT…GFLA), and 194-222 (LSHI…TRGP).

Heme b serves as cofactor.

The protein resides in the cell membrane. Its function is as follows. HMWC (high-molecular-weight cytochrome c), ORF2, ORF3, ORF4, ORF5 and ORF6 in the HMC operon form a transmembrane protein complex that allows electron flow from the periplasmic hydrogenase to the cytoplasmic enzymes that catalyze reduction of sulfates. In Nitratidesulfovibrio vulgaris (strain ATCC 29579 / DSM 644 / CCUG 34227 / NCIMB 8303 / VKM B-1760 / Hildenborough) (Desulfovibrio vulgaris), this protein is Protein DVU_0532.